The sequence spans 383 residues: Aquaporin-5 (383 aa).

Residues 1-46 (MSVTTLNGQPTLNISGPGQTALSRLDPLKKVFTKFFSSIPQKVRGH) are Cytoplasmic-facing. Residues 47–67 (VVAVIGELIGTTAFLFIAFSA) form a helical membrane-spanning segment. Topologically, residues 68 to 93 (AEVALASANDNKGDKVSYETKSISTT) are extracellular. The chain crosses the membrane as a helical span at residues 94-114 (QILFIAFGAGISLVVNAWTFF). Position 115 (R115) is a topological domain, cytoplasmic. The chain crosses the membrane as a helical span at residues 116-136 (ISGGLFDPAVSIALFFVGAID). Positions 122–124 (DPA) match the NPA 1 motif. The Extracellular segment spans residues 137-140 (LTRC). The chain crosses the membrane as a helical span at residues 141–161 (VLLCIAQCLGAIAASAMAYGL). Topologically, residues 162–180 (YHGGLHTATTLKPGMSPAQ) are cytoplasmic. Residues 181-201 (GVIVEMILTCQLCFTVLMLAA) traverse the membrane as a helical segment. Residues 202–207 (EKHEAT) lie on the Extracellular side of the membrane. Residues 208 to 228 (FLAPLGIGLSVFIGELAGVFW) form a helical membrane-spanning segment. Residues 229–252 (TGGSMNPARSLGPAVVTLSFPSYH) lie on the Cytoplasmic side of the membrane. The NPA 2 signature appears at 234–236 (NPA). The helical transmembrane segment at 253-273 (WIYWVGPIAGAGLASIIYKLI) threads the bilayer. Topologically, residues 274–383 (KALEYETAQL…DGFFGEMYAD (110 aa)) are extracellular. Residues 332-349 (ARKSSSLVPTKSTKSGNS) are compositionally biased toward polar residues. Residues 332–383 (ARKSSSLVPTKSTKSGNSEVKKTETVVEEPAKTQPKPAPAADDGFFGEMYAD) form a disordered region. Positions 350-362 (EVKKTETVVEEPA) are enriched in basic and acidic residues. Positions 363–372 (KTQPKPAPAA) are enriched in low complexity.

This sequence belongs to the MIP/aquaporin (TC 1.A.8) family.

The protein resides in the membrane. The enzyme catalyses H2O(in) = H2O(out). In terms of biological role, water channel required to facilitate the transport of water across membranes. May play a role in the vegetative growth. The polypeptide is Aquaporin-5 (Botryotinia fuckeliana (strain B05.10) (Noble rot fungus)).